The following is a 408-amino-acid chain: Acetate kinase (408 aa).

N7 contacts Mg(2+). K14 provides a ligand contact to ATP. Substrate is bound at residue R91. D148 (proton donor/acceptor) is an active-site residue. ATP is bound by residues 208–212 (HLGNG), 283–285 (DFR), and 331–335 (GIGEN). E384 serves as a coordination point for Mg(2+).

This sequence belongs to the acetokinase family. Homodimer. It depends on Mg(2+) as a cofactor. Mn(2+) is required as a cofactor.

It localises to the cytoplasm. It catalyses the reaction acetate + ATP = acetyl phosphate + ADP. It participates in metabolic intermediate biosynthesis; acetyl-CoA biosynthesis; acetyl-CoA from acetate: step 1/2. Its activity is regulated as follows. Inhibited by diethylpyrocarbonate, hydroxylamine and phenylglyoxal. In terms of biological role, catalyzes the formation of acetyl phosphate from acetate and ATP. Can also catalyze the reverse reaction. Can also phosphorylate propionate, but has very low activity toward butyrate. This is Acetate kinase from Methanosarcina thermophila.